The chain runs to 467 residues: Tripartite motif-containing protein 75 (467 aa).

Residues 16-57 form an RING-type zinc finger; it reads CPICLDDLTDPVTVECGHNFCRSCIKDFWAGQQATSSCPVCR. The B box-type zinc finger occupies 90-131; it reads ESSTSCERHNQALTLFCEDDLQLLCDQCVEPESHGRHQVLSI. Positions 95, 98, 117, and 123 each coordinate Zn(2+). The stretch at 168–222 forms a coiled coil; that stretch reads VTLREQAEAQRSQLTSECEKLMRFLDQEERAAFSRLEDEEMRLEKRLLDNIAALE. Residues 276 to 466 form the B30.2/SPRY domain; sequence YSFPLQYSAL…LRLCSATDSE (191 aa).

This sequence belongs to the TRIM/RBCC family.

It localises to the cytoplasm. It is found in the cytoskeleton. The protein resides in the spindle. May play a role in female meiosis. This chain is Tripartite motif-containing protein 75, found in Mus musculus (Mouse).